Reading from the N-terminus, the 131-residue chain is Large ribosomal subunit protein bL19 (131 aa).

Belongs to the bacterial ribosomal protein bL19 family.

This protein is located at the 30S-50S ribosomal subunit interface and may play a role in the structure and function of the aminoacyl-tRNA binding site. The polypeptide is Large ribosomal subunit protein bL19 (Polynucleobacter necessarius subsp. necessarius (strain STIR1)).